The sequence spans 238 residues: MSQSLIVALDFPGKQDVEQFLRHFEGEELFVKVGMELFYKEGPAIITYLKEKGHKIFLDLKLHDIPNTVKSAMRSLASLDVDMVNVHAGGGSSMMKAAIEGLEEGKQEGKERPICIAVTQLTSTSETMMKKEIGIEKTLEEAVAHYAKLTKESGLDGVVCSTLEVPKLREVCGSEFVTVTPGIRLASDDVNDQVRVATPKRARELGSSYIVVGRSITKAENPLEAYKTVKQQWEGVTV.

Residues D10, K32, 59-68, T122, R184, Q193, G213, and R214 each bind substrate; that span reads DLKLHDIPNT. K61 (proton donor) is an active-site residue.

It belongs to the OMP decarboxylase family. Type 1 subfamily. As to quaternary structure, homodimer.

It catalyses the reaction orotidine 5'-phosphate + H(+) = UMP + CO2. It participates in pyrimidine metabolism; UMP biosynthesis via de novo pathway; UMP from orotate: step 2/2. Catalyzes the decarboxylation of orotidine 5'-monophosphate (OMP) to uridine 5'-monophosphate (UMP). This is Orotidine 5'-phosphate decarboxylase from Bacillus anthracis (strain A0248).